Here is a 233-residue protein sequence, read N- to C-terminus: Large ribosomal subunit protein uL22m (233 aa).

The protein belongs to the universal ribosomal protein uL22 family. In terms of assembly, component of the mitochondrial ribosome large subunit (39S) which comprises a 16S rRNA and about 50 distinct proteins.

Its subcellular location is the mitochondrion. In Drosophila pseudoobscura pseudoobscura (Fruit fly), this protein is Large ribosomal subunit protein uL22m (mRpL22).